A 200-amino-acid chain; its full sequence is Phospholipase A2 inhibitor gamma subunit B (200 aa).

The signal sequence occupies residues 1–19 (MKFLLFCCLFGTFLATGMC). 8 cysteine pairs are disulfide-bonded: Cys-22-Cys-46, Cys-25-Cys-32, Cys-39-Cys-67, Cys-73-Cys-94, Cys-95-Cys-100, Cys-120-Cys-145, Cys-138-Cys-165, and Cys-171-Cys-191.

This sequence belongs to the CNF-like-inhibitor family. In terms of assembly, heteromer composed of subunit A and subunit B.

It is found in the secreted. Its function is as follows. Inhibits the enzymatic activity of the phospholipase A2 (PLA2). This is Phospholipase A2 inhibitor gamma subunit B from Elaphe climacophora (Japanese rat snake).